Consider the following 119-residue polypeptide: Ribonuclease P protein component (119 aa).

The protein belongs to the RnpA family. In terms of assembly, consists of a catalytic RNA component (M1 or rnpB) and a protein subunit.

The enzyme catalyses Endonucleolytic cleavage of RNA, removing 5'-extranucleotides from tRNA precursor.. In terms of biological role, RNaseP catalyzes the removal of the 5'-leader sequence from pre-tRNA to produce the mature 5'-terminus. It can also cleave other RNA substrates such as 4.5S RNA. The protein component plays an auxiliary but essential role in vivo by binding to the 5'-leader sequence and broadening the substrate specificity of the ribozyme. The chain is Ribonuclease P protein component from Chlamydia muridarum (strain MoPn / Nigg).